The sequence spans 297 residues: Aspartate dehydrogenase domain-containing protein (297 aa).

Serine 24 and serine 172 each carry phosphoserine.

It belongs to the L-aspartate dehydrogenase family.

The protein is Aspartate dehydrogenase domain-containing protein of Rattus norvegicus (Rat).